Here is a 124-residue protein sequence, read N- to C-terminus: Small ribosomal subunit protein bS6 (124 aa).

The interval 98–124 (EASPMLKAREERPRREDVREEAEEAAE) is disordered. Over residues 104 to 115 (KAREERPRREDV) the composition is skewed to basic and acidic residues.

This sequence belongs to the bacterial ribosomal protein bS6 family.

In terms of biological role, binds together with bS18 to 16S ribosomal RNA. The sequence is that of Small ribosomal subunit protein bS6 from Tolumonas auensis (strain DSM 9187 / NBRC 110442 / TA 4).